Consider the following 274-residue polypeptide: TATA box-binding protein-associated factor RNA polymerase I subunit D (274 aa).

Positions methionine 1 to glutamine 19 are enriched in polar residues. Disordered stretches follow at residues methionine 1–asparagine 45 and asparagine 84–arginine 111. Serine 20 bears the Phosphoserine mark. Positions asparagine 84–threonine 110 are enriched in basic residues. A phosphoserine mark is found at serine 132 and serine 229.

Component of the transcription factor SL1/TIF-IB complex, composed of TBP and at least TAF1A, TAF1B, TAF1C and TAF1D. Interacts with UBTF.

The protein resides in the nucleus. Component of the transcription factor SL1/TIF-IB complex, which is involved in the assembly of the PIC (preinitiation complex) during RNA polymerase I-dependent transcription. The rate of PIC formation probably is primarily dependent on the rate of association of SL1/TIF-IB with the rDNA promoter. SL1/TIF-IB is involved in stabilization of nucleolar transcription factor 1/UBTF on rDNA. Formation of SL1/TIF-IB excludes the association of TBP with TFIID subunits. The sequence is that of TATA box-binding protein-associated factor RNA polymerase I subunit D (TAF1D) from Bos taurus (Bovine).